A 273-amino-acid polypeptide reads, in one-letter code: Endoplasmic reticulum resident protein 27 (273 aa).

A signal peptide spans 1 to 25; the sequence is MEAAPSRFMFLLFLLTCELAAEVAA. One can recognise a Thioredoxin domain in the interval 39-152; the sequence is EPTWLTDVPA…MVTEYNPVTV (114 aa). N100 is a glycosylation site (N-linked (GlcNAc...) asparagine). Residues 230 to 233 are PDIA3-binding site; it reads DEWD. The short motif at 270–273 is the Prevents secretion from ER element; sequence KVEL.

The protein belongs to the protein disulfide isomerase family. As to quaternary structure, interacts with PDIA3.

Its subcellular location is the endoplasmic reticulum lumen. Specifically binds unfolded proteins and may recruit protein disulfide isomerase PDIA3 to unfolded substrates. Binds protein substrates via a hydrophobic pocket in the C-terminal domain. May play a role in the unfolded stress response. The polypeptide is Endoplasmic reticulum resident protein 27 (ERP27) (Homo sapiens (Human)).